The sequence spans 411 residues: Arginine deiminase 1 (411 aa).

The Amidino-cysteine intermediate role is filled by cysteine 401.

Belongs to the arginine deiminase family.

It localises to the cytoplasm. It carries out the reaction L-arginine + H2O = L-citrulline + NH4(+). It functions in the pathway amino-acid degradation; L-arginine degradation via ADI pathway; carbamoyl phosphate from L-arginine: step 1/2. The chain is Arginine deiminase 1 (arcA1) from Staphylococcus epidermidis (strain ATCC 12228 / FDA PCI 1200).